The sequence spans 262 residues: MVALDNSEGGPEATPSGETRLSLPGCLPPLSGSQVKRVSASRRKQHFINQAVRNSDLVPRAKGRKSLQRLENTQYLLTLLETAGGPPGVEDGDLTPAAPGIFAEACSNATYVEVWNDFMNRSGEEQERVLRYLEDESQGKRRRGPGRGEDRRREDPVFTPHECFRRISRRLRSVLKRSRIPMETLESWEERLLAFFSVSPQAVYTAMLDNSYERLLLHAVCQYMDLISASADLEGRRQMKVSNRHLDFLPPELLLSAYLDQQ.

2 disordered regions span residues 1–27 and 132–155; these read MVALDNSEGGPEATPSGETRLSLPGCL and YLEDESQGKRRRGPGRGEDRRRED. A compositionally biased stretch (basic and acidic residues) spans 146–155; that stretch reads GRGEDRRRED. Residues 182 to 245 form the R3H domain; that stretch reads METLESWEER…RRQMKVSNRH (64 aa).

It is found in the nucleus. In Mus musculus (Mouse), this protein is R3H domain-containing protein 4 (R3hdm4).